The sequence spans 150 residues: Macrodomain Ter protein (150 aa).

It belongs to the MatP family. As to quaternary structure, homodimer.

It is found in the cytoplasm. Required for spatial organization of the terminus region of the chromosome (Ter macrodomain) during the cell cycle. Prevents early segregation of duplicated Ter macrodomains during cell division. Binds specifically to matS, which is a 13 bp signature motif repeated within the Ter macrodomain. The chain is Macrodomain Ter protein from Salmonella agona (strain SL483).